Consider the following 278-residue polypeptide: ATP synthase subunit a (278 aa).

Transmembrane regions (helical) follow at residues 43-63, 104-124, 148-168, 191-211, 222-242, and 249-269; these read TWHIDSLFFSVGLGVLFLWIF, IAPLALTIFVWVFMMNFMDMI, DVNITFSLAIGVFLLIIFYSI, IPVNLLLETVTLIAKPISLAL, LIFILIALMYGTNLLLSTLGV, and LIFHILVITLQAFIFMMLTIV.

It belongs to the ATPase A chain family. F-type ATPases have 2 components, CF(1) - the catalytic core - and CF(0) - the membrane proton channel. CF(1) has five subunits: alpha(3), beta(3), gamma(1), delta(1), epsilon(1). CF(0) has three main subunits: a(1), b(2) and c(9-12). The alpha and beta chains form an alternating ring which encloses part of the gamma chain. CF(1) is attached to CF(0) by a central stalk formed by the gamma and epsilon chains, while a peripheral stalk is formed by the delta and b chains.

It is found in the cell inner membrane. Functionally, key component of the proton channel; it plays a direct role in the translocation of protons across the membrane. The sequence is that of ATP synthase subunit a from Shewanella baltica (strain OS185).